The chain runs to 218 residues: Small ribosomal subunit protein uS3c (218 aa).

The KH type-2 domain occupies 47–118 (VQKHMRISSG…RLNIAIARVP (72 aa)).

The protein belongs to the universal ribosomal protein uS3 family. Part of the 30S ribosomal subunit.

It localises to the plastid. It is found in the chloroplast. This Nuphar advena (Common spatterdock) protein is Small ribosomal subunit protein uS3c (rps3).